The following is a 310-amino-acid chain: Serine/threonine-protein phosphatase 4 catalytic subunit (310 aa).

Mn(2+)-binding residues include D53, H55, D81, and N113. The Proton donor role is filled by H114. H163 and H237 together coordinate Mn(2+). L310 bears the Leucine methyl ester mark.

The protein belongs to the PPP phosphatase family. PP-4 (PP-X) subfamily. In terms of assembly, catalytic subunit of the histone H2A phosphatase complex (HTP-C) containing PPH3, PSY2 and PSY4. Mn(2+) serves as cofactor.

The protein resides in the cytoplasm. It localises to the nucleus. The enzyme catalyses O-phospho-L-seryl-[protein] + H2O = L-seryl-[protein] + phosphate. The catalysed reaction is O-phospho-L-threonyl-[protein] + H2O = L-threonyl-[protein] + phosphate. Its function is as follows. Involved in the dephosphorylation and activation of the transcription factor GLN3 in response to nutrient availability. Forms the histone H2A phosphatase complex in association with the regulatory subunits PSY2 and PSY4, which dephosphorylates H2AS128ph (gamma-H2A) that has been displaced from sites of DNA lesions in the double-stranded DNA break repair process. Dephosphorylation is necessary for efficient recovery from the DNA damage checkpoint. The protein is Serine/threonine-protein phosphatase 4 catalytic subunit (PPH3) of Eremothecium gossypii (strain ATCC 10895 / CBS 109.51 / FGSC 9923 / NRRL Y-1056) (Yeast).